Reading from the N-terminus, the 685-residue chain is Galactocerebrosidase (685 aa).

A signal peptide spans 1–42 (MAEWLLSASRQRRVKAMTAAAGSAGRAAVPFLLCALLAPGGA). T109 serves as a coordination point for substrate. An N-linked (GlcNAc...) asparagine glycan is attached at N143. Positions 151 and 197 each coordinate substrate. Catalysis depends on E198, which acts as the Proton donor/acceptor. Residue E274 is the Nucleophile of the active site. The cysteines at positions 287 and 394 are disulfide-linked. N379 carries N-linked (GlcNAc...) asparagine glycosylation. R396 serves as a coordination point for substrate. 5 N-linked (GlcNAc...) asparagine glycosylation sites follow: N403, N451, N556, N559, and N602.

It belongs to the glycosyl hydrolase 59 family.

Its subcellular location is the lysosome. It catalyses the reaction a beta-D-galactosyl-(1&lt;-&gt;1')-N-acylsphing-4-enine + H2O = an N-acylsphing-4-enine + D-galactose. The catalysed reaction is beta-D-galactosyl-(1&lt;-&gt;1)-sphing-4-enine + H2O = sphing-4-enine + D-galactose. It carries out the reaction a D-galactosylceramide + H2O = an N-acyl-sphingoid base + D-galactose. Functionally, hydrolyzes the galactose ester bonds of glycolipids such as galactosylceramide and galactosylsphingosine. Enzyme with very low activity responsible for the lysosomal catabolism of galactosylceramide, a major lipid in myelin, kidney and epithelial cells of small intestine and colon. This is Galactocerebrosidase from Macaca mulatta (Rhesus macaque).